We begin with the raw amino-acid sequence, 666 residues long: MATPNGLARIETTGKKKQDNGVWYDDSSAPVRAQTIDELHSLQRKRSAPTTPNRSAPTTPIKGGAHSPFAVAISEEERHTQQMQSISASLASLTRETGPKVVKGDPAAKGEAAAQGAPSTPRAHQQHRHPAAPAIAVSDSSLKFTHVLNNLSPAELYEQAIKYEKGSFITSTGALATLSGAKTGRSPRDKRVVKDEVTAQDLWWGKGSPNIEMDEKTFLINRERAVDYLNSLKVVRQRQLLNWDPENRIKVRIISARAYHSLFMHNMCIRPTDEELEDFGTPDFTIYNAGQFPCNRYTHYMTSSTSIDLNLARREMVIMGTQYAGEMKKGLFGVMHYLMPKRGILSLHSGCNMGKDGDVALFFGLSGTGKTTLSTDHNGLLIGDDEHCWSDNGVSNIEGGCYAKCIDLAQEKEPDIWNAIKFGTVLENVVFDEHTREVDYADYSVTENTRAAYPIEYIPIAKIPCVGPHPKNVILLACDAFGVLPPVSKLILAQTMYHFISGYTALVAGTEDGIKEPQATFSACFGAAFIMLHPTKYAAMLAEKMQKYGATGWLVNTGWSGGRYGVGKRIRLPYTRKIIDAIHSGELLTANYQKTEVFGLEIPTEINGVPSEILDPIYTWTDKAAYKENLLRLGGLFKNNFEVFASYKIGDDSSLTDEILAAGPNF.

Disordered stretches follow at residues 1–68 (MATP…AHSP) and 91–132 (ASLT…HPAA). Over residues 48–58 (APTTPNRSAPT) the composition is skewed to polar residues. Low complexity predominate over residues 109–123 (KGEAAAQGAPSTPRA). 364–371 (GLSGTGKT) lines the ATP pocket.

The protein belongs to the phosphoenolpyruvate carboxykinase (ATP) family.

It localises to the cytoplasm. It carries out the reaction oxaloacetate + ATP = phosphoenolpyruvate + ADP + CO2. It functions in the pathway carbohydrate biosynthesis; gluconeogenesis. This Zea mays (Maize) protein is Phosphoenolpyruvate carboxykinase (ATP).